A 312-amino-acid chain; its full sequence is Malate dehydrogenase (312 aa).

NAD(+) is bound by residues 7–13 and aspartate 34; that span reads GAAGGIG. Substrate-binding residues include arginine 81 and arginine 87. NAD(+) is bound by residues asparagine 94 and 117-119; that span reads ITN. Residues asparagine 119 and arginine 153 each contribute to the substrate site. Histidine 177 functions as the Proton acceptor in the catalytic mechanism. Residue methionine 227 coordinates NAD(+).

Belongs to the LDH/MDH superfamily. MDH type 1 family. As to quaternary structure, homodimer.

It carries out the reaction (S)-malate + NAD(+) = oxaloacetate + NADH + H(+). Functionally, catalyzes the reversible oxidation of malate to oxaloacetate. This is Malate dehydrogenase from Escherichia coli O6:K15:H31 (strain 536 / UPEC).